Here is a 78-residue protein sequence, read N- to C-terminus: MSDIEQRVKQAVAEQLGLKAEEIKNEASFMDDLGADSLDLVELVMSFENDFDITIPDEDSNEITTVQSAIDYVTKKLG.

The 76-residue stretch at 2 to 77 folds into the Carrier domain; the sequence is SDIEQRVKQA…SAIDYVTKKL (76 aa). An O-(pantetheine 4'-phosphoryl)serine modification is found at serine 37.

This sequence belongs to the acyl carrier protein (ACP) family. 4'-phosphopantetheine is transferred from CoA to a specific serine of apo-ACP by AcpS. This modification is essential for activity because fatty acids are bound in thioester linkage to the sulfhydryl of the prosthetic group.

It localises to the cytoplasm. Its pathway is lipid metabolism; fatty acid biosynthesis. In terms of biological role, carrier of the growing fatty acid chain in fatty acid biosynthesis. The chain is Acyl carrier protein from Acinetobacter baumannii (strain AB307-0294).